The sequence spans 248 residues: Putative TrmH family tRNA/rRNA methyltransferase (248 aa).

S-adenosyl-L-methionine is bound by residues Gly196, Ile216, and Leu225.

This sequence belongs to the class IV-like SAM-binding methyltransferase superfamily. RNA methyltransferase TrmH family.

The protein is Putative TrmH family tRNA/rRNA methyltransferase of Staphylococcus aureus (strain COL).